A 347-amino-acid polypeptide reads, in one-letter code: Protein RecA (347 aa).

64-71 (GPESSGKT) contributes to the ATP binding site.

It belongs to the RecA family.

It localises to the cytoplasm. In terms of biological role, can catalyze the hydrolysis of ATP in the presence of single-stranded DNA, the ATP-dependent uptake of single-stranded DNA by duplex DNA, and the ATP-dependent hybridization of homologous single-stranded DNAs. It interacts with LexA causing its activation and leading to its autocatalytic cleavage. The polypeptide is Protein RecA (Bartonella tribocorum (strain CIP 105476 / IBS 506)).